A 273-amino-acid polypeptide reads, in one-letter code: 4-hydroxy-tetrahydrodipicolinate reductase (273 aa).

NAD(+)-binding positions include 11 to 16 and 106 to 108; these read GATGKM and GTT. Residue H162 is the Proton donor/acceptor of the active site. Position 163 (H163) interacts with (S)-2,3,4,5-tetrahydrodipicolinate. The Proton donor role is filled by K166. (S)-2,3,4,5-tetrahydrodipicolinate is bound at residue 172–173; sequence GT.

This sequence belongs to the DapB family.

The protein resides in the cytoplasm. The catalysed reaction is (S)-2,3,4,5-tetrahydrodipicolinate + NAD(+) + H2O = (2S,4S)-4-hydroxy-2,3,4,5-tetrahydrodipicolinate + NADH + H(+). The enzyme catalyses (S)-2,3,4,5-tetrahydrodipicolinate + NADP(+) + H2O = (2S,4S)-4-hydroxy-2,3,4,5-tetrahydrodipicolinate + NADPH + H(+). It functions in the pathway amino-acid biosynthesis; L-lysine biosynthesis via DAP pathway; (S)-tetrahydrodipicolinate from L-aspartate: step 4/4. Its function is as follows. Catalyzes the conversion of 4-hydroxy-tetrahydrodipicolinate (HTPA) to tetrahydrodipicolinate. In Synechococcus sp. (strain ATCC 27144 / PCC 6301 / SAUG 1402/1) (Anacystis nidulans), this protein is 4-hydroxy-tetrahydrodipicolinate reductase.